A 614-amino-acid polypeptide reads, in one-letter code: Vitamin B12 transporter BtuB (614 aa).

Positions 1-20 (MIKKASLLTACSVTAFSAWA) are cleaved as a signal peptide. The TonB box motif lies at 26 to 33 (DTLVVTAN). Residues 38–152 (PRSTVLAPTT…IGGVVNIITT (115 aa)) form the TBDR plug domain. Cyanocob(III)alamin-binding positions include Leu-83, Ser-85, Asn-92, and 110–111 (VS). Residues 155–614 (EPGTEISAGW…EYTLSGSYTF (460 aa)) form the TBDR beta-barrel domain. The next 3 beta stranded transmembrane spans lie at 158–165 (TEISAGWG), 169–178 (YQNYDVSTQQ), and 184–195 (TRVTLLGDYAHT). Ca(2+) contacts are provided by Asp-199, Gln-211, Asp-213, and Asp-215. Beta stranded transmembrane passes span 217–227 (FLSKTLYGALE) and 232–248 (DAWS…NRTN). Tyr-249 and Asp-250 together coordinate Ca(2+). Ala-251 serves as a coordination point for cyanocob(III)alamin. Position 261 (Asp-261) interacts with Ca(2+). 14 beta stranded membrane-spanning segments follow: residues 263–277 (RKLY…LRYN), 279–296 (ELIK…KDYN), 309–325 (TLDE…NNVI), 328–337 (HGSIGAGVDW), 353–369 (YDQR…QQVG), 371–381 (FTFEGAARSDD), 385–400 (FGRH…WEFI), 403–417 (YRFI…KAPN), 434–443 (KSKQWEGAFE), 449–458 (VNWRISGYRN), 473–490 (YYNE…TANF), 494–509 (PLTH…ARNA), 517–529 (RRAK…QLDW), and 535–550 (DWGI…YDKD). Thr-309 serves as a coordination point for cyanocob(III)alamin. Arg-517 lines the cyanocob(III)alamin pocket. Position 551 (Tyr-551) interacts with cyanocob(III)alamin. Transmembrane regions (beta stranded) follow at residues 558-572 (TVKM…LAVA), 585-596 (IANLFDKDYETV), and 602-614 (AGRE…SYTF). The short motif at 597–614 (YGYQTAGREYTLSGSYTF) is the TonB C-terminal box element.

It belongs to the TonB-dependent receptor family. BtuB (TC 1.B.14.3.1) subfamily.

It localises to the cell outer membrane. Its function is as follows. Involved in the active translocation of vitamin B12 (cyanocobalamin) across the outer membrane to the periplasmic space. It derives its energy for transport by interacting with the trans-periplasmic membrane protein TonB. The sequence is that of Vitamin B12 transporter BtuB from Escherichia coli O9:H4 (strain HS).